A 386-amino-acid polypeptide reads, in one-letter code: Succinyl-diaminopimelate desuccinylase (386 aa).

Zn(2+) is bound at residue histidine 75. Aspartate 77 is a catalytic residue. Residue aspartate 108 coordinates Zn(2+). Glutamate 138 (proton acceptor) is an active-site residue. Positions 139, 167, and 356 each coordinate Zn(2+).

Belongs to the peptidase M20A family. DapE subfamily. Homodimer. Zn(2+) is required as a cofactor. Co(2+) serves as cofactor.

It catalyses the reaction N-succinyl-(2S,6S)-2,6-diaminopimelate + H2O = (2S,6S)-2,6-diaminopimelate + succinate. It functions in the pathway amino-acid biosynthesis; L-lysine biosynthesis via DAP pathway; LL-2,6-diaminopimelate from (S)-tetrahydrodipicolinate (succinylase route): step 3/3. Catalyzes the hydrolysis of N-succinyl-L,L-diaminopimelic acid (SDAP), forming succinate and LL-2,6-diaminopimelate (DAP), an intermediate involved in the bacterial biosynthesis of lysine and meso-diaminopimelic acid, an essential component of bacterial cell walls. The chain is Succinyl-diaminopimelate desuccinylase from Caulobacter vibrioides (strain ATCC 19089 / CIP 103742 / CB 15) (Caulobacter crescentus).